Reading from the N-terminus, the 245-residue chain is Large ribosomal subunit protein uL4 (245 aa).

Residues 1-13 are compositionally biased toward polar residues; sequence MSRVATSDPSVTA. Disordered regions lie at residues 1–28, 56–114, and 224–245; these read MSRV…EGGS, ARQG…QRTP, and TSTA…EENK. Basic and acidic residues predominate over residues 59-71; that stretch reads GTHDTKTRGEVRG. Residues 72-83 show a composition bias toward basic residues; sequence GGRKPYRQKGTG.

This sequence belongs to the universal ribosomal protein uL4 family. As to quaternary structure, part of the 50S ribosomal subunit.

Functionally, one of the primary rRNA binding proteins, this protein initially binds near the 5'-end of the 23S rRNA. It is important during the early stages of 50S assembly. It makes multiple contacts with different domains of the 23S rRNA in the assembled 50S subunit and ribosome. Forms part of the polypeptide exit tunnel. The polypeptide is Large ribosomal subunit protein uL4 (Frankia casuarinae (strain DSM 45818 / CECT 9043 / HFP020203 / CcI3)).